The following is a 265-amino-acid chain: Lysosomal membrane ascorbate-dependent ferrireductase CYB561A3 (265 aa).

The Cytoplasmic portion of the chain corresponds to 1-2 (MA). A helical membrane pass occupies residues 3–23 (VGWFYLSVLALCSLGSMCILF). One can recognise a Cytochrome b561 domain in the interval 12-219 (ALCSLGSMCI…FGLLVLYILL (208 aa)). The Lumenal segment spans residues 24–45 (TIYWMRYWHGGFAWDGSMLMFN). Residues 46-66 (WHPVLMVTGMVVLYSAASLVY) form a helical membrane-spanning segment. Residues His47 and Arg67 each contribute to the heme b site. Over 67–83 (RLPQSWVGPRLPWKSGH) the chain is Cytoplasmic. L-ascorbate contacts are provided by Arg76 and Lys80. A heme b-binding site is contributed by His83. The chain crosses the membrane as a helical span at residues 84 to 104 (AAMHLLAFLLTVLGLHAVFEF). The Lumenal portion of the chain corresponds to 105-119 (HNHAKIPHLYSLHSW). Residues 112–115 (HLYS) and His117 contribute to the heme b site. Residues 120 to 140 (LGITTVFLFACQWFLGFSVFL) traverse the membrane as a helical segment. At 141–154 (LPWASMWLRSLLKP) the chain is on the cytoplasmic side. An L-ascorbate-binding site is contributed by Arg149. The helical transmembrane segment at 155-175 (IHVFFGASILSLAIASVVSGI) threads the bilayer. Positions 156 and 177 each coordinate heme b. The Lumenal segment spans residues 176-197 (NEKLFFSLKNGTKTYSNLPSEA). Asn185 carries an N-linked (GlcNAc...) asparagine glycan. A helical membrane pass occupies residues 198 to 218 (VFANCAGMLVVVFGLLVLYIL). Over 219-265 (LASSWKRPEPGMQAEREPTRTRGRAGTPEVMLEGERGLAEPLLQKRS) the chain is Cytoplasmic. Lys224 lines the heme b pocket. Basic and acidic residues predominate over residues 228–238 (PGMQAEREPTR). The disordered stretch occupies residues 228 to 265 (PGMQAEREPTRTRGRAGTPEVMLEGERGLAEPLLQKRS).

Homodimer. Heme b serves as cofactor. In terms of processing, N-glycosylated.

It is found in the late endosome membrane. The protein resides in the lysosome membrane. It catalyses the reaction Fe(3+)(out) + L-ascorbate(in) = monodehydro-L-ascorbate radical(in) + Fe(2+)(out) + H(+). Its function is as follows. Transmembrane reductase that uses ascorbate as an electron donor in the cytoplasm and transfers electrons across membranes to reduce iron cations Fe(3+) into Fe(2+) in the lumen of the late endosome and lysosome. Reduced iron can then be extruded from the late endosome and lysosome to the cytoplasm by divalent metal-specific transporters. It is therefore most probably involved in endosomal and lysosomal cellular iron homeostasis. The sequence is that of Lysosomal membrane ascorbate-dependent ferrireductase CYB561A3 from Bos taurus (Bovine).